The sequence spans 820 residues: Phospholipase D alpha 3 (820 aa).

One can recognise a C2 domain in the interval 1–133; sequence MTEQLLLHGT…ITGQPIDRWL (133 aa). Asp-194 is a Ca(2+) binding site. The PLD phosphodiesterase 1 domain occupies 334–371; sequence TMFTHHQKTIVVDSEVDGSLTKRRIVSFLGGIDLCDGR. Residues His-339, Lys-341, and Asp-346 contribute to the active site. Position 339 (His-339) interacts with a 1,2-diacyl-sn-glycero-3-phosphate. Ca(2+) is bound by residues His-377 and His-411. A 1,2-diacyl-sn-glycero-3-phosphate contacts are provided by Gln-528 and His-667. Residues 662–689 enclose the PLD phosphodiesterase 2 domain; sequence FMIYVHSKMMIVDDEYIIIGSANINQRS. Residues His-667, Lys-669, and Asp-674 contribute to the active site. Glu-730 contributes to the Ca(2+) binding site.

This sequence belongs to the phospholipase D family. C2-PLD subfamily. Ca(2+) is required as a cofactor. In terms of tissue distribution, expressed in buds, flowers, siliques, stems, old leaves and roots. Expressed in the sieve elements.

The protein resides in the cytoplasm. It localises to the membrane. It carries out the reaction a 1,2-diacyl-sn-glycero-3-phosphocholine + H2O = a 1,2-diacyl-sn-glycero-3-phosphate + choline + H(+). In terms of biological role, hydrolyzes glycerol-phospholipids at the terminal phosphodiesteric bond to generate phosphatidic acids (PA). Active with phosphatidylcholine (PC), phosphatidylethanolamine (PE), phosphatidylglycerol (PG), and phosphatidylserine (PS) as substrates. No activity toward phosphatidylinositol (PI) or PIP2. Positively mediates plant responses to hyperosmotic stresses and promotes root growth, flowering, and stress avoidance. Not involved in the abscisic acid regulation of stomatal movement and transpirational water loss. The protein is Phospholipase D alpha 3 of Arabidopsis thaliana (Mouse-ear cress).